The following is a 101-amino-acid chain: Urease subunit beta (101 aa).

It belongs to the urease beta subunit family. Heterotrimer of UreA (gamma), UreB (beta) and UreC (alpha) subunits. Three heterotrimers associate to form the active enzyme.

The protein resides in the cytoplasm. The catalysed reaction is urea + 2 H2O + H(+) = hydrogencarbonate + 2 NH4(+). It functions in the pathway nitrogen metabolism; urea degradation; CO(2) and NH(3) from urea (urease route): step 1/1. The sequence is that of Urease subunit beta from Burkholderia cenocepacia (strain ATCC BAA-245 / DSM 16553 / LMG 16656 / NCTC 13227 / J2315 / CF5610) (Burkholderia cepacia (strain J2315)).